Consider the following 335-residue polypeptide: Methylthioribose-1-phosphate isomerase (335 aa).

Residues 43–45, Arg86, and Gln193 each bind substrate; that span reads RGA. The active-site Proton donor is Asp234. 244–245 is a substrate binding site; the sequence is NK.

This sequence belongs to the eIF-2B alpha/beta/delta subunits family. MtnA subfamily.

The catalysed reaction is 5-(methylsulfanyl)-alpha-D-ribose 1-phosphate = 5-(methylsulfanyl)-D-ribulose 1-phosphate. The protein operates within amino-acid biosynthesis; L-methionine biosynthesis via salvage pathway; L-methionine from S-methyl-5-thio-alpha-D-ribose 1-phosphate: step 1/6. In terms of biological role, catalyzes the interconversion of methylthioribose-1-phosphate (MTR-1-P) into methylthioribulose-1-phosphate (MTRu-1-P). This is Methylthioribose-1-phosphate isomerase from Parabacteroides distasonis (strain ATCC 8503 / DSM 20701 / CIP 104284 / JCM 5825 / NCTC 11152).